Reading from the N-terminus, the 963-residue chain is Pyruvate, phosphate dikinase 1, chloroplastic (963 aa).

Residues 1–76 (MLYIRKKMTS…GLHRETKARA (76 aa)) constitute a chloroplast transit peptide. Residue Thr543 is modified to Phosphothreonine; by PDRP1. His545 (tele-phosphohistidine intermediate) is an active-site residue. Arg651, Arg707, Glu836, Gly857, Thr858, Asn859, and Asp860 together coordinate substrate. Residue Glu836 coordinates Mg(2+). A Mg(2+)-binding site is contributed by Asp860. The active-site Proton donor is the Cys922.

The protein belongs to the PEP-utilizing enzyme family. As to quaternary structure, homotetramer. Interacts with RP1 and RP2. The cofactor is Mg(2+). Phosphorylation of Thr-543 in the dark inactivates the enzyme. Dephosphorylation upon light stimulation reactivates the enzyme. As to expression, isoform 1 is expressed in leaves, flowers and siliques. Isoform 2 is found in cotyledons, rosette and cauline leaves, petioles, flowers and siliques.

Its subcellular location is the plastid. It is found in the chloroplast. It localises to the cytoplasm. It catalyses the reaction pyruvate + phosphate + ATP = phosphoenolpyruvate + AMP + diphosphate + H(+). With respect to regulation, activated by light-induced dephosphorylation. Inhibited by dark-induced phosphorylation. Both reactions are catalyzed by PDRP1. Functionally, formation of phosphoenolpyruvate. May be involved in regulating the flux of carbon into starch and fatty acids of seeds and in the remobilization of nitrogen reserves in senescing leaves. The polypeptide is Pyruvate, phosphate dikinase 1, chloroplastic (PPDK) (Arabidopsis thaliana (Mouse-ear cress)).